A 107-amino-acid polypeptide reads, in one-letter code: Putative pterin-4-alpha-carbinolamine dehydratase (107 aa).

The protein belongs to the pterin-4-alpha-carbinolamine dehydratase family.

The catalysed reaction is (4aS,6R)-4a-hydroxy-L-erythro-5,6,7,8-tetrahydrobiopterin = (6R)-L-erythro-6,7-dihydrobiopterin + H2O. The chain is Putative pterin-4-alpha-carbinolamine dehydratase from Rubrobacter xylanophilus (strain DSM 9941 / JCM 11954 / NBRC 16129 / PRD-1).